Reading from the N-terminus, the 373-residue chain is uncharacterized protein (373 aa).

Belongs to the glycosyltransferase 28 family.

This is an uncharacterized protein from Bacillus subtilis (strain 168).